Here is a 228-residue protein sequence, read N- to C-terminus: MRRVILPLVMTVTLCLAQEASEACTKALTDCENDLECQNRLAPLMAACSTNTCQPQCRSAVLNVYQNKLGRILLRSDATCIPGRDELRTCNFLPAESTVHCSLGKLACEGDLQCNSKFGVFMSECEADAARGACTDKCKTLLNQTIETSVGSVFSNCTCTARDDQLCTNLKDNLLGVCLKNTPGVTLSPSDNSITDAPGGNDLADSSVGHGFNILSAISVYLLTVLVF.

Residues 1 to 17 (MRRVILPLVMTVTLCLA) form the signal peptide. Asn-143 and Asn-156 each carry an N-linked (GlcNAc...) asparagine glycan. Asp-205 is lipidated: GPI-anchor amidated aspartate. Residues 206 to 228 (SSVGHGFNILSAISVYLLTVLVF) constitute a propeptide, removed in mature form.

In terms of tissue distribution, pharynx muscle cells from its early formation, in the two-fold embryo, until the adult stage.

The protein localises to the cell membrane. Its function is as follows. Role in pharynx function or development. The sequence is that of Growth arrest-specific protein 1 homolog (phg-1) from Caenorhabditis elegans.